A 107-amino-acid chain; its full sequence is Basic phospholipase A2 sphenotoxin subunit B (107 aa).

3 residues coordinate Ca(2+): tyrosine 27, glycine 29, and glycine 31. 5 disulfides stabilise this stretch: cysteine 28-cysteine 44, cysteine 43-cysteine 91, cysteine 50-cysteine 88, cysteine 57-cysteine 81, and cysteine 75-cysteine 86. Residue histidine 47 is part of the active site. Aspartate 48 contributes to the Ca(2+) binding site. Aspartate 89 is a catalytic residue.

It belongs to the phospholipase A2 family. Group II subfamily. D49 sub-subfamily. Heterodimer of A and B chains; non-covalently linked. The acidic protein (B chain) has phospholipase A2 activity and the A chain weakly inhibits the B chain enzymatic activity but potentiates its lethal potency. Expressed by the venom gland.

It localises to the secreted. It carries out the reaction a 1,2-diacyl-sn-glycero-3-phosphocholine + H2O = a 1-acyl-sn-glycero-3-phosphocholine + a fatty acid + H(+). Its function is as follows. Heterodimer A-B: Sphenotoxin is a potent neurotoxin that possesses phospholipase A2 (PLA2) activity. It consists of a non-covalent association of a basic PLA2 subunit B with a non-enzymatic subunit A. In terms of biological role, monomer B: Not found in vivo. In vitro, potent neurotoxin that possesses phospholipase A2 (PLA2) activity and exerts a lethal action by blocking neuromuscular transmission. Induces paralysis of the hind legs and neuromuscular blockade in mouse phrenic nerve-diaphragm preparations. PLA2 catalyzes the calcium-dependent hydrolysis of the 2-acyl groups in 3-sn-phosphoglycerides. This Ophryacus sphenophrys (Broad-horned pitviper) protein is Basic phospholipase A2 sphenotoxin subunit B.